Reading from the N-terminus, the 93-residue chain is uncharacterized protein (93 aa).

In terms of domain architecture, Sm spans 1 to 76 (MDSHTTEKRR…IQTIEPDESM (76 aa)).

In terms of assembly, part of the core SMN complex at least composed of smn1, yip11/gem2, gem6, gem7 and gem8. Interacts with gem7; the interaction is direct.

Its function is as follows. The SMN complex catalyzes the assembly of small nuclear ribonucleoproteins (snRNPs), the building blocks of the spliceosome, and thereby plays an important role in the splicing of cellular pre-mRNAs. Most spliceosomal snRNPs contain a common set of Sm proteins smb1, smd1, smd2, smd3, sme1, smf1 and smg1 that assemble in a heptameric protein ring on the Sm site of the small nuclear RNA to form the core snRNP (Sm core). In the cytosol, the Sm proteins smd1, smd2, sme1, smf1 and smg1 (5Sm) are trapped in an inactive 6S pICln-Sm complex by the chaperone saf5. To complete assembly of core snRNPs, the SMN complex accepts 5Sm from saf5. Binding of snRNA inside 5Sm triggers eviction of the SMN complex, thereby allowing binding of smd3 and smb1 to complete assembly of the core snRNP. This is an uncharacterized protein from Schizosaccharomyces pombe (strain 972 / ATCC 24843) (Fission yeast).